The sequence spans 397 residues: Acetate kinase (397 aa).

Asn8 serves as a coordination point for Mg(2+). Lys15 contacts ATP. Arg89 is a substrate binding site. Asp146 acts as the Proton donor/acceptor in catalysis. ATP contacts are provided by residues 206–210, 281–283, and 329–333; these read HLGNG, DLR, and GVGEN. A Mg(2+)-binding site is contributed by Glu382.

It belongs to the acetokinase family. As to quaternary structure, homodimer. Mg(2+) serves as cofactor. Mn(2+) is required as a cofactor.

The protein localises to the cytoplasm. It catalyses the reaction acetate + ATP = acetyl phosphate + ADP. The protein operates within metabolic intermediate biosynthesis; acetyl-CoA biosynthesis; acetyl-CoA from acetate: step 1/2. Functionally, catalyzes the formation of acetyl phosphate from acetate and ATP. Can also catalyze the reverse reaction. The sequence is that of Acetate kinase from Bacillus cereus (strain ATCC 14579 / DSM 31 / CCUG 7414 / JCM 2152 / NBRC 15305 / NCIMB 9373 / NCTC 2599 / NRRL B-3711).